A 177-amino-acid polypeptide reads, in one-letter code: Large ribosomal subunit protein uL6 (177 aa).

Positions 157–171 (YKGKGVRYSDENVRR) are enriched in basic and acidic residues. Positions 157-177 (YKGKGVRYSDENVRRKEAKKK) are disordered.

The protein belongs to the universal ribosomal protein uL6 family. Part of the 50S ribosomal subunit.

Functionally, this protein binds to the 23S rRNA, and is important in its secondary structure. It is located near the subunit interface in the base of the L7/L12 stalk, and near the tRNA binding site of the peptidyltransferase center. This chain is Large ribosomal subunit protein uL6, found in Pseudoalteromonas translucida (strain TAC 125).